The sequence spans 541 residues: GTPase Obg (541 aa).

One can recognise an Obg domain in the interval Pro2–Val159. A disordered region spans residues His63–Gly84. One can recognise an OBG-type G domain in the interval Ala160–Ala332. Residues Gly166–Ser173, Phe191–Val195, Asp213–Gly216, Asn284–Asp287, and Ser313–Ala315 contribute to the GTP site. Mg(2+) is bound by residues Ser173 and Thr193. Positions Pro350–Pro427 constitute an OCT domain. The disordered stretch occupies residues Lys497 to Gly541. Low complexity predominate over residues Gly517–Gly527. The segment covering Asp528–Gly541 has biased composition (gly residues).

Belongs to the TRAFAC class OBG-HflX-like GTPase superfamily. OBG GTPase family. Monomer. Mg(2+) serves as cofactor.

It localises to the cytoplasm. In terms of biological role, an essential GTPase which binds GTP, GDP and possibly (p)ppGpp with moderate affinity, with high nucleotide exchange rates and a fairly low GTP hydrolysis rate. Plays a role in control of the cell cycle, stress response, ribosome biogenesis and in those bacteria that undergo differentiation, in morphogenesis control. This chain is GTPase Obg, found in Parafrankia sp. (strain EAN1pec).